A 150-amino-acid polypeptide reads, in one-letter code: Ribonuclease K6 (150 aa).

The signal sequence occupies residues M1–A23. The active-site Proton acceptor is H38. Cystine bridges form between C46-C104, C60-C114, C78-C129, and C85-C92. N55 is a glycosylation site (N-linked (GlcNAc...) asparagine). Substrate-binding positions include K61–T65 and K86. The N-linked (GlcNAc...) asparagine glycan is linked to N100. A substrate-binding site is contributed by R105. Catalysis depends on H145, which acts as the Proton donor.

The protein belongs to the pancreatic ribonuclease family. In terms of assembly, interacts (via N-terminus) with bacterial lipopolysaccharide (LPS).

The protein resides in the secreted. It is found in the lysosome. It localises to the cytoplasmic granule. Functionally, ribonuclease which shows a preference for the pyrimidines uridine and cytosine. Has potent antibacterial activity against a range of Gram-positive and Gram-negative bacteria, including P.aeruginosa, A.baumanii, M.luteus, S.aureus, E.faecalis, E.faecium, S.saprophyticus and E.coli. Causes loss of bacterial membrane integrity, and also promotes agglutination of Gram-negative bacteria. Probably contributes to urinary tract sterility. Bactericidal activity is independent of RNase activity. The polypeptide is Ribonuclease K6 (RNASE6) (Miopithecus talapoin (Angolan talapoin)).